Reading from the N-terminus, the 356-residue chain is DNA polymerase IV (356 aa).

Residues 7 to 188 (IIHIDMDCFY…LPLKKISGVG (182 aa)) enclose the UmuC domain. Residues D11 and D106 each contribute to the Mg(2+) site. Residue E107 is part of the active site.

It belongs to the DNA polymerase type-Y family. Monomer. Requires Mg(2+) as cofactor.

It is found in the cytoplasm. It carries out the reaction DNA(n) + a 2'-deoxyribonucleoside 5'-triphosphate = DNA(n+1) + diphosphate. Its function is as follows. Poorly processive, error-prone DNA polymerase involved in untargeted mutagenesis. Copies undamaged DNA at stalled replication forks, which arise in vivo from mismatched or misaligned primer ends. These misaligned primers can be extended by PolIV. Exhibits no 3'-5' exonuclease (proofreading) activity. May be involved in translesional synthesis, in conjunction with the beta clamp from PolIII. This chain is DNA polymerase IV, found in Glaesserella parasuis serovar 5 (strain SH0165) (Haemophilus parasuis).